Reading from the N-terminus, the 21-residue chain is Fibrinogen beta chain (21 aa).

Glutamine 1 bears the Pyrrolidone carboxylic acid mark. A compositionally biased stretch (acidic residues) spans glutamine 1–glutamine 10. The tract at residues glutamine 1–arginine 21 is disordered. The O-linked (GalNAc...) threonine glycan is linked to threonine 4. Sulfotyrosine is present on tyrosine 6.

In terms of assembly, heterohexamer; disulfide linked. Contains 2 sets of 3 non-identical chains (alpha, beta and gamma). The 2 heterotrimers are in head to head conformation with the N-termini in a small central domain. Post-translationally, conversion of fibrinogen to fibrin is triggered by thrombin, which cleaves fibrinopeptides A and B from alpha and beta chains, and thus exposes the N-terminal polymerization sites responsible for the formation of the soft clot.

The protein localises to the secreted. Functionally, cleaved by the protease thrombin to yield monomers which, together with fibrinogen alpha (FGA) and fibrinogen gamma (FGG), polymerize to form an insoluble fibrin matrix. Fibrin has a major function in hemostasis as one of the primary components of blood clots. In addition, functions during the early stages of wound repair to stabilize the lesion and guide cell migration during re-epithelialization. Was originally thought to be essential for platelet aggregation, based on in vitro studies using anticoagulated blood. However subsequent studies have shown that it is not absolutely required for thrombus formation in vivo. Enhances expression of SELP in activated platelets. Maternal fibrinogen is essential for successful pregnancy. Fibrin deposition is also associated with infection, where it protects against IFNG-mediated hemorrhage. May also facilitate the antibacterial immune response via both innate and T-cell mediated pathways. This chain is Fibrinogen beta chain (FGB), found in Bubalus bubalis (Domestic water buffalo).